We begin with the raw amino-acid sequence, 917 residues long: Hexokinase-2 (917 aa).

An N-acetylmethionine modification is found at M1. The mitochondrial-binding peptide (MBP) stretch occupies residues 1–16 (MIASHLLAYFFTELNH). Hexokinase domains follow at residues 16–458 (HDQV…MVTA) and 464–906 (ADQH…LITA). Residues R30 and 84–89 (DLGGTN) each bind ATP. Residues 73–207 (DGTEHGEFLA…DFDIDIVAVV (135 aa)) are hexokinase small subdomain 1. Position 84-88 (84-88 (DLGGT)) interacts with D-glucose 6-phosphate. D-glucose contacts are provided by residues 155 to 156 (SF), 172 to 173 (TK), and 208 to 209 (ND). The interval 208 to 447 (NDTVGTMMTC…CDVRFLRSED (240 aa)) is hexokinase large subdomain 1. D-glucose 6-phosphate is bound by residues D209 and T232. D-glucose-binding positions include N235, E260, and 291–294 (QLFE). Residue 413 to 415 (DGS) coordinates D-glucose 6-phosphate. 425–426 (KR) provides a ligand contact to ATP. D-glucose 6-phosphate-binding positions include S449 and 532 to 536 (DLGGT). The interval 521-655 (DGTEKGDFLA…EFDLDVVAVV (135 aa)) is hexokinase small subdomain 2. ATP is bound at residue 532 to 537 (DLGGTN). Residues 603–604 (SF), 620–621 (TK), and 656–657 (ND) contribute to the D-glucose site. The tract at residues 656–895 (NDTVGTMMTC…CDVSFLQSED (240 aa)) is hexokinase large subdomain 2. D-glucose 6-phosphate contacts are provided by D657 and T680. Residue T680 coordinates ATP. D-glucose is bound by residues 682–683 (SN), E708, and 739–742 (QRFE). ATP-binding positions include 747 to 748 (GM), 784 to 788 (TKFLS), and 863 to 867 (TLYKL). D-glucose 6-phosphate is bound by residues 861–863 (DGT) and S897.

It belongs to the hexokinase family. Monomer. Interacts with TIGAR; the interaction increases hexokinase activity in a hypoxia- and HIF1A-dependent manner. As to expression, predominant hexokinase isozyme expressed in insulin-responsive tissues such as skeletal muscle.

It localises to the mitochondrion outer membrane. It is found in the cytoplasm. The protein localises to the cytosol. The catalysed reaction is a D-hexose + ATP = a D-hexose 6-phosphate + ADP + H(+). The enzyme catalyses D-fructose + ATP = D-fructose 6-phosphate + ADP + H(+). It catalyses the reaction D-glucose + ATP = D-glucose 6-phosphate + ADP + H(+). It functions in the pathway carbohydrate metabolism; hexose metabolism. Its pathway is carbohydrate degradation; glycolysis; D-glyceraldehyde 3-phosphate and glycerone phosphate from D-glucose: step 1/4. With respect to regulation, hexokinase activity is specifically inhibited by 2,6-disubstituted glucosamines. In terms of biological role, catalyzes the phosphorylation of hexose, such as D-glucose and D-fructose, to hexose 6-phosphate (D-glucose 6-phosphate and D-fructose 6-phosphate, respectively). Mediates the initial step of glycolysis by catalyzing phosphorylation of D-glucose to D-glucose 6-phosphate. Plays a key role in maintaining the integrity of the outer mitochondrial membrane by preventing the release of apoptogenic molecules from the intermembrane space and subsequent apoptosis. The polypeptide is Hexokinase-2 (Homo sapiens (Human)).